The primary structure comprises 431 residues: MSKLDTTKSKIAFKEAQKYMPGGVNSPVRAFKNVGGDPLFIDHGKDEYIYDIDGNKYIDYVLSWGPLILGHADDHVVAELDKAVAKGTSYGAPTLQETELAKIVNKIMPSIEMIRMVSSGTEATMSAIRLARGYTHRKKIVKFVGNYHGHSDSLLVDAGSGLATFGINTSPGVPDDLAYDTLTVAYNDVAGVKKLFAEHGDEIACAIVEPVAGNMGVIPGTQEFLQTLRNVTNEHGALLIFDEVMSGFRAAYHGVQSLVNITPDLTTLGKVIGGGLPVGAFGGRREIMENITPAGDIYHAGTLSGNPLAMTGGISTLEQLTPDDYVEMDKKVTALTEGIKHAADQYGVPMTVHHVGTMWSYFYNSDPINNFDDVKACDQKLFEKCFWELLAHGVYVAPSQFETNFISTKHTDEDIEKTIAAFDAAFNAATK.

Lys-270 carries the N6-(pyridoxal phosphate)lysine modification.

The protein belongs to the class-III pyridoxal-phosphate-dependent aminotransferase family. HemL subfamily. Homodimer. Requires pyridoxal 5'-phosphate as cofactor.

The protein localises to the cytoplasm. The enzyme catalyses (S)-4-amino-5-oxopentanoate = 5-aminolevulinate. The protein operates within porphyrin-containing compound metabolism; protoporphyrin-IX biosynthesis; 5-aminolevulinate from L-glutamyl-tRNA(Glu): step 2/2. This Limosilactobacillus reuteri subsp. reuteri (strain JCM 1112) (Lactobacillus reuteri) protein is Glutamate-1-semialdehyde 2,1-aminomutase.